The primary structure comprises 122 residues: Large ribosomal subunit protein uL14c (122 aa).

Belongs to the universal ribosomal protein uL14 family. In terms of assembly, part of the 50S ribosomal subunit.

The protein resides in the plastid. It is found in the chloroplast. In terms of biological role, binds to 23S rRNA. The chain is Large ribosomal subunit protein uL14c from Carica papaya (Papaya).